The primary structure comprises 438 residues: MPRRSPADPAAALAPRRTTLPGGLRVVTEFLPAVHSASVGVWVGVGSRDEGATVAGAAHFLEHLLFKSTPTRSAVDIAQAMDAVGGELNAFTAKEHTCYYAHVLGSDLPLAVDLVADVVLNGRCAADDVEVERDVVLEEIAMRDDDPEDALADMFLAALFGDHPVGRPVIGSAQSVSVMTRAQLQSFHLRRYTPERMVVAAAGNVDHDGLVALVREHFGSRLVRGRRPVAPRKGTGRVNGSPRLTLVSRDAEQTHVSLGIRTPGRGWEHRWALSVLHTALGGGLSSRLFQEVRETRGLAYSVYSALDLFADSGALSVYAACLPERFADVMRVTADVLESVARDGITEAECGIAKGSLRGGLVLGLEDSSSRMSRLGRSELNYGKHRSIEHTLRQIEQVTVEEVNAVARHLLSRRYGAAVLGPHGSKRSLPQQLRAMVG.

His-59 is a Zn(2+) binding site. Glu-62 acts as the Proton acceptor in catalysis. Residues His-63 and Glu-139 each contribute to the Zn(2+) site.

The protein belongs to the peptidase M16 family. It depends on Zn(2+) as a cofactor.

This is an uncharacterized protein from Mycobacterium bovis (strain ATCC BAA-935 / AF2122/97).